The primary structure comprises 688 residues: Glycine--tRNA ligase beta subunit (688 aa).

The protein belongs to the class-II aminoacyl-tRNA synthetase family. As to quaternary structure, tetramer of two alpha and two beta subunits.

Its subcellular location is the cytoplasm. It carries out the reaction tRNA(Gly) + glycine + ATP = glycyl-tRNA(Gly) + AMP + diphosphate. This chain is Glycine--tRNA ligase beta subunit, found in Chromohalobacter salexigens (strain ATCC BAA-138 / DSM 3043 / CIP 106854 / NCIMB 13768 / 1H11).